Consider the following 49-residue polypeptide: Large ribosomal subunit protein bL33B (49 aa).

It belongs to the bacterial ribosomal protein bL33 family.

This Lactobacillus helveticus (strain DPC 4571) protein is Large ribosomal subunit protein bL33B.